A 163-amino-acid polypeptide reads, in one-letter code: ATP synthase subunit b (163 aa).

Residues 1-11 (MLWKANVWVLG) constitute a propeptide that is removed on maturation. A helical membrane pass occupies residues 16–36 (GISGGTIIYQLLMFIILLALL).

This sequence belongs to the ATPase B chain family. In terms of assembly, F-type ATPases have 2 components, F(1) - the catalytic core - and F(0) - the membrane proton channel. F(1) has five subunits: alpha(3), beta(3), gamma(1), delta(1), epsilon(1). F(0) has three main subunits: a(1), b(2) and c(10-14). The alpha and beta chains form an alternating ring which encloses part of the gamma chain. F(1) is attached to F(0) by a central stalk formed by the gamma and epsilon chains, while a peripheral stalk is formed by the delta and b chains.

The protein resides in the cell membrane. In terms of biological role, f(1)F(0) ATP synthase produces ATP from ADP in the presence of a proton or sodium gradient. F-type ATPases consist of two structural domains, F(1) containing the extramembraneous catalytic core and F(0) containing the membrane proton channel, linked together by a central stalk and a peripheral stalk. During catalysis, ATP synthesis in the catalytic domain of F(1) is coupled via a rotary mechanism of the central stalk subunits to proton translocation. Its function is as follows. Component of the F(0) channel, it forms part of the peripheral stalk, linking F(1) to F(0). The chain is ATP synthase subunit b from Bacillus sp. (strain PS3).